The chain runs to 274 residues: 4-hydroxy-tetrahydrodipicolinate reductase (274 aa).

Residue 7-12 participates in NAD(+) binding; the sequence is GVTGRM. R40 contacts NADP(+). NAD(+) is bound by residues 103–105 and 127–130; these read GTT and SANF. H160 acts as the Proton donor/acceptor in catalysis. Position 161 (H161) interacts with (S)-2,3,4,5-tetrahydrodipicolinate. Residue K164 is the Proton donor of the active site. Residue 170–171 participates in (S)-2,3,4,5-tetrahydrodipicolinate binding; sequence GT.

This sequence belongs to the DapB family. In terms of assembly, homotetramer.

It localises to the cytoplasm. The enzyme catalyses (S)-2,3,4,5-tetrahydrodipicolinate + NAD(+) + H2O = (2S,4S)-4-hydroxy-2,3,4,5-tetrahydrodipicolinate + NADH + H(+). It catalyses the reaction (S)-2,3,4,5-tetrahydrodipicolinate + NADP(+) + H2O = (2S,4S)-4-hydroxy-2,3,4,5-tetrahydrodipicolinate + NADPH + H(+). The protein operates within amino-acid biosynthesis; L-lysine biosynthesis via DAP pathway; (S)-tetrahydrodipicolinate from L-aspartate: step 4/4. Catalyzes the conversion of 4-hydroxy-tetrahydrodipicolinate (HTPA) to tetrahydrodipicolinate. The chain is 4-hydroxy-tetrahydrodipicolinate reductase from Blochmanniella floridana.